Here is a 517-residue protein sequence, read N- to C-terminus: Cytochrome P450 monooxygenase cdmJ (517 aa).

Residues 15–35 form a helical membrane-spanning segment; that stretch reads YMWSLTLFALCLSAILMFPFL. N-linked (GlcNAc...) asparagine glycosylation is present at Asn404. Position 451 (Cys451) interacts with heme.

This sequence belongs to the cytochrome P450 family. Heme is required as a cofactor.

The protein localises to the membrane. It carries out the reaction 3-hydroxypentacecilide A + NADPH + O2 + H(+) = chrodrimanin F + NADP(+) + H2O. It catalyses the reaction chrodrimanin C + NADPH + O2 + H(+) = chrodrimanin H + NADP(+) + H2O. The catalysed reaction is verruculide A + NADPH + O2 + H(+) = chrodrimanin E + NADP(+) + H2O. The enzyme catalyses chrodrimanin T + NADPH + O2 + H(+) = chrodrimanin A + NADP(+) + H2O. It functions in the pathway secondary metabolite biosynthesis; terpenoid biosynthesis. Functionally, cytochrome P450 monooxygenase; part of the gene cluster that mediates the biosynthesis of chrodrimanin B, a meroterpenoid that acts as a potent blocker of insect GABA-gated chloride channels. The first step of the pathway is the biosynthesis of 6-hydroxymellein by the polyketide synthase cdmE. The prenyltransferase cdmH acts as a 6-hydroxymellein 5-farnesyltransferase and produces the hydrophobic metabolite verruculide C. The FAD-dependent monooxygenase cdmI further converts verruculide C into verruculide B. The terpene cyclase cdmG then produced the pentacyclic molecule 3-hydroxypentacecilide A, the backbone structure of chrodrimanin B, via folding the farnesyl moiety of the substrate into the chair-boat conformation. The short-chain dehydrogenase/reductase cdmF functions as the 3-OH dehydrogenase that oxidizes the C-3 hydroxyl group of 3-hydroxypentacecilide A and produces chrodrimanin C, the dehydrogenated product of 3-hydroxypentacecilide A. The cytochrome P450 monooxygenase cdmJ then accepts both 3-hydroxypentacecilide A and chrodrimanin C and functions as a C-7-beta-hydroxylase to produce respectively chrodrimanin H and chrodrimanin F. The dioxygenase cdmA accepts chrodrimanin H to afford chrodrimanin E, which is further transformed to chrodrimanin A by the dioxygenase cdmD. CdmA can also accept chrodrimanin C as substrate to convert it into verruculide A, which is further converted into chrodrimanin T by cdmD. The last step of the biosynthesis is proposed to be performed by the acetyltransferase cdmC which acetylates chrodrimanin A to yield chrodrimanin B. The pathway may also lead to the production of additional shunt products, including chrodrimanins T and U. The protein is Cytochrome P450 monooxygenase cdmJ of Talaromyces verruculosus (Penicillium verruculosum).